The sequence spans 341 residues: Peroxisomal membrane protein PEX14 (341 aa).

An N-acetylserine modification is found at S2. The short motif at 86-94 (PPTLPHRDW) is the SH3-binding element. Residues 276 to 341 (MQEESDKEKE…QNGQVEDSIP (66 aa)) form a disordered region. The segment covering 279 to 295 (ESDKEKENGSDANKDDN) has biased composition (basic and acidic residues). The segment covering 308–341 (IDSNASIPEWQKNTAANEISVPDWQNGQVEDSIP) has biased composition (polar residues). S313 bears the Phosphoserine mark.

Belongs to the peroxin-14 family. In terms of assembly, interacts with PEX13 (via SH3 domain); forming the PEX13-PEX14 docking complex. Interacts with PEX5 (via WxxxF/Y motifs). Interacts with PEX7. Interacts with PEX9.

The protein localises to the peroxisome membrane. In terms of biological role, component of the PEX13-PEX14 docking complex, a translocon channel that specifically mediates the import of peroxisomal cargo proteins bound to PEX5 or PEX21 receptors. The PEX13-PEX14 docking complex forms a large import pore which can be opened to a diameter of about 9 nm. Mechanistically, PEX5 (or PEX21) receptor along with cargo proteins associates with the PEX14 subunit of the PEX13-PEX14 docking complex in the cytosol, leading to the insertion of the receptor into the organelle membrane with the concomitant translocation of the cargo into the peroxisome matrix. The protein is Peroxisomal membrane protein PEX14 of Saccharomyces cerevisiae (strain ATCC 204508 / S288c) (Baker's yeast).